Reading from the N-terminus, the 336-residue chain is Dihydroorotate dehydrogenase (quinone) (336 aa).

Residues 62–66 (AGLDK) and Thr-86 each bind FMN. A substrate-binding site is contributed by Lys-66. Residue 111-115 (NRMGF) coordinates substrate. Residues Asn-139 and Asn-172 each contribute to the FMN site. Asn-172 serves as a coordination point for substrate. Ser-175 acts as the Nucleophile in catalysis. Position 177 (Asn-177) interacts with substrate. 2 residues coordinate FMN: Lys-217 and Thr-245. A substrate-binding site is contributed by 246 to 247 (NT). FMN is bound by residues Gly-268, Gly-297, and 318 to 319 (YS).

The protein belongs to the dihydroorotate dehydrogenase family. Type 2 subfamily. In terms of assembly, monomer. It depends on FMN as a cofactor.

Its subcellular location is the cell membrane. The catalysed reaction is (S)-dihydroorotate + a quinone = orotate + a quinol. Its pathway is pyrimidine metabolism; UMP biosynthesis via de novo pathway; orotate from (S)-dihydroorotate (quinone route): step 1/1. In terms of biological role, catalyzes the conversion of dihydroorotate to orotate with quinone as electron acceptor. This is Dihydroorotate dehydrogenase (quinone) from Yersinia pseudotuberculosis serotype O:1b (strain IP 31758).